The primary structure comprises 105 residues: Putative ferredoxin-3 (105 aa).

4Fe-4S ferredoxin-type domains follow at residues 17 to 46 (YLTAIDAMTCIGCGRCFKVCSREVMHLHGI) and 70 to 100 (TIMVVDHAGRCIGCGACARVCPKNCQTHVAA). [4Fe-4S] cluster contacts are provided by cysteine 26, cysteine 29, cysteine 32, cysteine 36, cysteine 80, cysteine 83, cysteine 86, and cysteine 90.

The cofactor is [4Fe-4S] cluster.

In terms of biological role, ferredoxins are iron-sulfur proteins that transfer electrons in a wide variety of metabolic reactions. This Sinorhizobium fredii (strain NBRC 101917 / NGR234) protein is Putative ferredoxin-3 (fdxB).